The following is a 321-amino-acid chain: Lipoyl synthase (321 aa).

[4Fe-4S] cluster is bound by residues Cys68, Cys73, Cys79, Cys94, Cys98, Cys101, and Ser308. The Radical SAM core domain maps to 80-297; sequence FNHGTATFMI…RVFAEEIGFT (218 aa).

This sequence belongs to the radical SAM superfamily. Lipoyl synthase family. [4Fe-4S] cluster serves as cofactor.

The protein resides in the cytoplasm. It carries out the reaction [[Fe-S] cluster scaffold protein carrying a second [4Fe-4S](2+) cluster] + N(6)-octanoyl-L-lysyl-[protein] + 2 oxidized [2Fe-2S]-[ferredoxin] + 2 S-adenosyl-L-methionine + 4 H(+) = [[Fe-S] cluster scaffold protein] + N(6)-[(R)-dihydrolipoyl]-L-lysyl-[protein] + 4 Fe(3+) + 2 hydrogen sulfide + 2 5'-deoxyadenosine + 2 L-methionine + 2 reduced [2Fe-2S]-[ferredoxin]. It functions in the pathway protein modification; protein lipoylation via endogenous pathway; protein N(6)-(lipoyl)lysine from octanoyl-[acyl-carrier-protein]: step 2/2. Its function is as follows. Catalyzes the radical-mediated insertion of two sulfur atoms into the C-6 and C-8 positions of the octanoyl moiety bound to the lipoyl domains of lipoate-dependent enzymes, thereby converting the octanoylated domains into lipoylated derivatives. The polypeptide is Lipoyl synthase (Shewanella woodyi (strain ATCC 51908 / MS32)).